The sequence spans 480 residues: Ribosomal RNA small subunit methyltransferase F (480 aa).

Residues 125-131 (AAAPGSK), Glu-149, Asp-176, and Asp-194 contribute to the S-adenosyl-L-methionine site. Residue Cys-247 is the Nucleophile of the active site.

Belongs to the class I-like SAM-binding methyltransferase superfamily. RsmB/NOP family.

The protein localises to the cytoplasm. The enzyme catalyses cytidine(1407) in 16S rRNA + S-adenosyl-L-methionine = 5-methylcytidine(1407) in 16S rRNA + S-adenosyl-L-homocysteine + H(+). Functionally, specifically methylates the cytosine at position 1407 (m5C1407) of 16S rRNA. This is Ribosomal RNA small subunit methyltransferase F from Enterobacter sp. (strain 638).